A 508-amino-acid chain; its full sequence is UTP--glucose-1-phosphate uridylyltransferase (508 aa).

S2 bears the Blocked amino end (Ser) mark. Position 13 is a phosphoserine (S13). Residues 113–116 (LNGG), K127, Q190, and G222 each bind UTP. Position 115-116 (115-116 (GG)) interacts with substrate. K127 is a Mg(2+) binding site. Substrate-binding positions include H223 and 251–253 (NID). UTP is bound by residues D253 and K396. D253 contacts Mg(2+). The active site involves K396. T426 is modified (phosphothreonine). The residue at position 434 (S434) is a Phosphoserine. The residue at position 438 (K438) is an N6-acetyllysine. Phosphoserine is present on residues S448 and S461. Residues 457-508 (HLTVSGDVTFGKNVSLKGTVIIIANHGDRIDIPPGAVLENKIVSGNLRILDH) form an oligomerization region. The critical for end-to-end subunit interaction stretch occupies residues 502–503 (NL).

It belongs to the UDPGP type 1 family. As to quaternary structure, homooctamer.

Its subcellular location is the cytoplasm. It catalyses the reaction alpha-D-glucose 1-phosphate + UTP + H(+) = UDP-alpha-D-glucose + diphosphate. It functions in the pathway glycan biosynthesis; glycogen biosynthesis. In terms of biological role, UTP--glucose-1-phosphate uridylyltransferase catalyzing the conversion of glucose-1-phosphate into UDP-glucose, a crucial precursor for the production of glycogen. In Bos taurus (Bovine), this protein is UTP--glucose-1-phosphate uridylyltransferase (UGP2).